Here is a 486-residue protein sequence, read N- to C-terminus: Glutamyl-tRNA(Gln) amidotransferase subunit A (486 aa).

Residues lysine 75 and serine 150 each act as charge relay system in the active site. Serine 174 serves as the catalytic Acyl-ester intermediate.

It belongs to the amidase family. GatA subfamily. In terms of assembly, heterotrimer of A, B and C subunits.

The catalysed reaction is L-glutamyl-tRNA(Gln) + L-glutamine + ATP + H2O = L-glutaminyl-tRNA(Gln) + L-glutamate + ADP + phosphate + H(+). Functionally, allows the formation of correctly charged Gln-tRNA(Gln) through the transamidation of misacylated Glu-tRNA(Gln) in organisms which lack glutaminyl-tRNA synthetase. The reaction takes place in the presence of glutamine and ATP through an activated gamma-phospho-Glu-tRNA(Gln). This is Glutamyl-tRNA(Gln) amidotransferase subunit A from Nostoc sp. (strain PCC 7120 / SAG 25.82 / UTEX 2576).